A 205-amino-acid polypeptide reads, in one-letter code: uncharacterized protein (205 aa).

The 61-residue stretch at Asp-11 to Gly-71 folds into the HTH tetR-type domain. Positions Thr-34 to Phe-53 form a DNA-binding region, H-T-H motif.

This is an uncharacterized protein from Bacillus subtilis (strain 168).